A 327-amino-acid polypeptide reads, in one-letter code: Embigin (327 aa).

The signal sequence occupies residues 1–32 (MRALPGLLEARARTPRLLLLQCLLAAARPSSA). Topologically, residues 33-260 (DGSAPDSPFT…ELVVLSYLVP (228 aa)) are extracellular. N-linked (GlcNAc...) asparagine glycosylation is found at Asn-54, Asn-61, Asn-75, Asn-85, Asn-100, Asn-189, Asn-196, Asn-213, and Asn-218. Ig-like V-type domains follow at residues 71-158 (PVEK…NFKV) and 159-253 (PELH…IELV). 2 cysteine pairs are disulfide-bonded: Cys-88/Cys-142 and Cys-180/Cys-237. Residues 261 to 281 (LKPFLVIVAEVILLVATILLC) traverse the membrane as a helical segment. Topologically, residues 282–327 (EKYTQKKKKHSDEGKEFEQIEQLKSDDSNGIENNVPRHRKNESLGQ) are cytoplasmic. A disordered region spans residues 287-327 (KKKKHSDEGKEFEQIEQLKSDDSNGIENNVPRHRKNESLGQ). A compositionally biased stretch (basic and acidic residues) spans 291-308 (HSDEGKEFEQIEQLKSDD). Ser-309 is modified (phosphoserine).

Interacts with SLC16A1, SLC16A6 and SLC16A7.

It localises to the cell membrane. The protein resides in the synapse. Its function is as follows. Plays a role in the outgrowth of motoneurons and in the formation of neuromuscular junctions. Following muscle denervation, promotes nerve terminal sprouting and the formation of additional acetylcholine receptor clusters at synaptic sites without affecting terminal Schwann cell number or morphology. Delays the retraction of terminal sprouts following re-innervation of denervated endplates. May play a role in targeting the monocarboxylate transporters SLC16A1, SLC16A6 and SLC16A7 to the cell membrane. The sequence is that of Embigin (EMB) from Homo sapiens (Human).